The chain runs to 264 residues: Tryptophan synthase alpha chain (264 aa).

Active-site proton acceptor residues include E49 and D60.

This sequence belongs to the TrpA family. As to quaternary structure, tetramer of two alpha and two beta chains.

It catalyses the reaction (1S,2R)-1-C-(indol-3-yl)glycerol 3-phosphate + L-serine = D-glyceraldehyde 3-phosphate + L-tryptophan + H2O. The protein operates within amino-acid biosynthesis; L-tryptophan biosynthesis; L-tryptophan from chorismate: step 5/5. The alpha subunit is responsible for the aldol cleavage of indoleglycerol phosphate to indole and glyceraldehyde 3-phosphate. This chain is Tryptophan synthase alpha chain, found in Lachnospira eligens (strain ATCC 27750 / DSM 3376 / VPI C15-48 / C15-B4) (Eubacterium eligens).